The chain runs to 50 residues: AEGDDPAKAAFDSLQASATEYIGYAWAMVVVIVGATIGIKLFKKFASKAS.

The Periplasmic segment spans residues 1-21; the sequence is AEGDDPAKAAFDSLQASATEY. The chain crosses the membrane as a helical span at residues 22–42; the sequence is IGYAWAMVVVIVGATIGIKLF. Topologically, residues 43–50 are cytoplasmic; sequence KKFASKAS.

The protein belongs to the inovirus capsid protein family. Homomultimerizes. There are several thousands of this protein in the phage capsid.

It localises to the virion. It is found in the host membrane. Its function is as follows. Self assembles to form a helical capsid wrapping up the viral genomic DNA. The capsid displays a filamentous structure with a length of 760-1950 nm and a width of 6-8 nm. The virion assembly and budding take place at the host inner membrane. This chain is Capsid protein G8P (VIII), found in Escherichia coli (Bacteriophage ZJ-2).